Reading from the N-terminus, the 818-residue chain is Phenylalanine--tRNA ligase beta subunit (818 aa).

A tRNA-binding domain is found at 39–148 (AAELQKFEVA…EDAVVGENFT (110 aa)). The B5 domain maps to 423–498 (SQKKPLDFSA…RIYGYDKIES (76 aa)). Mg(2+)-binding residues include aspartate 476, aspartate 482, glutamate 485, and glutamate 486. One can recognise an FDX-ACB domain in the interval 724–817 (SDFQANFRDY…ISQKFQGTLR (94 aa)).

The protein belongs to the phenylalanyl-tRNA synthetase beta subunit family. Type 1 subfamily. In terms of assembly, tetramer of two alpha and two beta subunits. The cofactor is Mg(2+).

The protein localises to the cytoplasm. The enzyme catalyses tRNA(Phe) + L-phenylalanine + ATP = L-phenylalanyl-tRNA(Phe) + AMP + diphosphate + H(+). The protein is Phenylalanine--tRNA ligase beta subunit of Rickettsia conorii (strain ATCC VR-613 / Malish 7).